The chain runs to 227 residues: Orotidine 5'-phosphate decarboxylase (227 aa).

Substrate-binding positions include Asp8, Lys30, 57-66 (DLKFHDIPNT), Thr116, Arg177, Gln186, Gly206, and Arg207. The active-site Proton donor is the Lys59.

This sequence belongs to the OMP decarboxylase family. Type 1 subfamily. As to quaternary structure, homodimer.

It carries out the reaction orotidine 5'-phosphate + H(+) = UMP + CO2. Its pathway is pyrimidine metabolism; UMP biosynthesis via de novo pathway; UMP from orotate: step 2/2. Its function is as follows. Catalyzes the decarboxylation of orotidine 5'-monophosphate (OMP) to uridine 5'-monophosphate (UMP). This chain is Orotidine 5'-phosphate decarboxylase, found in Acinetobacter baylyi (strain ATCC 33305 / BD413 / ADP1).